The chain runs to 196 residues: Holliday junction resolvase RecU (196 aa).

Mg(2+) is bound by residues T82, D84, E97, and Q116.

This sequence belongs to the RecU family. Requires Mg(2+) as cofactor.

The protein resides in the cytoplasm. The catalysed reaction is Endonucleolytic cleavage at a junction such as a reciprocal single-stranded crossover between two homologous DNA duplexes (Holliday junction).. In terms of biological role, endonuclease that resolves Holliday junction intermediates in genetic recombination. Cleaves mobile four-strand junctions by introducing symmetrical nicks in paired strands. Promotes annealing of linear ssDNA with homologous dsDNA. Required for DNA repair, homologous recombination and chromosome segregation. The sequence is that of Holliday junction resolvase RecU from Oceanobacillus iheyensis (strain DSM 14371 / CIP 107618 / JCM 11309 / KCTC 3954 / HTE831).